We begin with the raw amino-acid sequence, 293 residues long: Diaminopimelate epimerase (293 aa).

Substrate contacts are provided by Asn-17, Gln-49, and Asn-69. The Proton donor role is filled by Cys-78. Substrate contacts are provided by residues 79–80, Asn-169, Asn-203, and 221–222; these read GN and ER. Cys-230 functions as the Proton acceptor in the catalytic mechanism. A substrate-binding site is contributed by 231–232; that stretch reads GS.

The protein belongs to the diaminopimelate epimerase family. As to quaternary structure, homodimer.

The protein resides in the cytoplasm. It carries out the reaction (2S,6S)-2,6-diaminopimelate = meso-2,6-diaminopimelate. Its pathway is amino-acid biosynthesis; L-lysine biosynthesis via DAP pathway; DL-2,6-diaminopimelate from LL-2,6-diaminopimelate: step 1/1. Its function is as follows. Catalyzes the stereoinversion of LL-2,6-diaminopimelate (L,L-DAP) to meso-diaminopimelate (meso-DAP), a precursor of L-lysine and an essential component of the bacterial peptidoglycan. This is Diaminopimelate epimerase from Methylobacterium sp. (strain 4-46).